The sequence spans 510 residues: 2,3-bisphosphoglycerate-independent phosphoglycerate mutase (510 aa).

Mn(2+) is bound by residues aspartate 12 and serine 62. Residue serine 62 is the Phosphoserine intermediate of the active site. Residues histidine 123, 153–154 (RD), arginine 185, arginine 191, 260–263 (RPDR), and lysine 335 each bind substrate. Residues aspartate 402, histidine 406, aspartate 443, histidine 444, and histidine 461 each coordinate Mn(2+).

Belongs to the BPG-independent phosphoglycerate mutase family. As to quaternary structure, monomer. It depends on Mn(2+) as a cofactor.

The catalysed reaction is (2R)-2-phosphoglycerate = (2R)-3-phosphoglycerate. Its pathway is carbohydrate degradation; glycolysis; pyruvate from D-glyceraldehyde 3-phosphate: step 3/5. Catalyzes the interconversion of 2-phosphoglycerate and 3-phosphoglycerate. This Listeria welshimeri serovar 6b (strain ATCC 35897 / DSM 20650 / CCUG 15529 / CIP 8149 / NCTC 11857 / SLCC 5334 / V8) protein is 2,3-bisphosphoglycerate-independent phosphoglycerate mutase.